The sequence spans 270 residues: 23S rRNA (adenosine(1067)-2'-O)-methyltransferase (270 aa).

Arginine 135, arginine 165, glycine 218, isoleucine 238, and leucine 247 together coordinate S-adenosyl-L-methionine.

It belongs to the class IV-like SAM-binding methyltransferase superfamily. RNA methyltransferase TsnR/AvirB family.

It carries out the reaction adenosine(1067) in 23S rRNA + S-adenosyl-L-methionine = 2'-O-methyladenosine(1067) in 23S rRNA + S-adenosyl-L-homocysteine + H(+). In terms of biological role, specifically methylates the adenosine-1067 in 23S ribosomal RNA. Confers resistance to antibiotic thiostrepton. In Streptomyces laurentii, this protein is 23S rRNA (adenosine(1067)-2'-O)-methyltransferase.